A 170-amino-acid polypeptide reads, in one-letter code: ATP synthase F(1) complex subunit delta, mitochondrial (170 aa).

The N-terminal 33 residues, 1–33 (MIRSIIKSSNNLLKSNVAINSNKRFFATEASAT), are a transit peptide targeting the mitochondrion.

Belongs to the ATPase epsilon chain family. Component of the ATP synthase complex composed at least of ATP5F1A/subunit alpha, ATP5F1B/subunit beta, ATP5MC1/subunit c (homooctomer), MT-ATP6/subunit a, MT-ATP8/subunit 8, ATP5ME/subunit e, ATP5MF/subunit f, ATP5MG/subunit g, ATP5MK/subunit k, ATP5MJ/subunit j, ATP5F1C/subunit gamma, ATP5F1D/subunit delta, ATP5F1E/subunit epsilon, ATP5PF/subunit F6, ATP5PB/subunit b, ATP5PD/subunit d, ATP5PO/subunit OSCP. ATP synthase complex consists of a soluble F(1) head domain (subunits alpha(3) and beta(3)) - the catalytic core - and a membrane F(0) domain - the membrane proton channel (subunits c, a, 8, e, f, g, k and j). These two domains are linked by a central stalk (subunits gamma, delta, and epsilon) rotating inside the F1 region and a stationary peripheral stalk (subunits F6, b, d, and OSCP).

The protein localises to the mitochondrion. Its subcellular location is the mitochondrion inner membrane. Subunit delta, of the mitochondrial membrane ATP synthase complex (F(1)F(0) ATP synthase or Complex V) that produces ATP from ADP in the presence of a proton gradient across the membrane which is generated by electron transport complexes of the respiratory chain. ATP synthase complex consist of a soluble F(1) head domain - the catalytic core - and a membrane F(1) domain - the membrane proton channel. These two domains are linked by a central stalk rotating inside the F(1) region and a stationary peripheral stalk. During catalysis, ATP synthesis in the catalytic domain of F(1) is coupled via a rotary mechanism of the central stalk subunits to proton translocation. In vivo, can only synthesize ATP although its ATP hydrolase activity can be activated artificially in vitro. With the central stalk subunit gamma, is essential for the biogenesis of F(1) catalytic part of the ATP synthase complex namely in the formation of F1 assembly intermediate. This is ATP synthase F(1) complex subunit delta, mitochondrial from Dictyostelium discoideum (Social amoeba).